Here is a 488-residue protein sequence, read N- to C-terminus: UDP-N-acetylmuramoyl-L-alanyl-D-glutamate--2,6-diaminopimelate ligase (488 aa).

UDP-N-acetyl-alpha-D-muramoyl-L-alanyl-D-glutamate-binding positions include L24, S26, and 41-43 (HQV). An ATP-binding site is contributed by 113–119 (GTNGKTT). UDP-N-acetyl-alpha-D-muramoyl-L-alanyl-D-glutamate-binding positions include N154, 155-156 (TT), S182, Q188, and R190. Residue K222 is modified to N6-carboxylysine. Meso-2,6-diaminopimelate contacts are provided by residues R386, 410–413 (DNPR), G461, and E465. The Meso-diaminopimelate recognition motif signature appears at 410 to 413 (DNPR).

It belongs to the MurCDEF family. MurE subfamily. It depends on Mg(2+) as a cofactor. Post-translationally, carboxylation is probably crucial for Mg(2+) binding and, consequently, for the gamma-phosphate positioning of ATP.

Its subcellular location is the cytoplasm. It catalyses the reaction UDP-N-acetyl-alpha-D-muramoyl-L-alanyl-D-glutamate + meso-2,6-diaminopimelate + ATP = UDP-N-acetyl-alpha-D-muramoyl-L-alanyl-gamma-D-glutamyl-meso-2,6-diaminopimelate + ADP + phosphate + H(+). It participates in cell wall biogenesis; peptidoglycan biosynthesis. Functionally, catalyzes the addition of meso-diaminopimelic acid to the nucleotide precursor UDP-N-acetylmuramoyl-L-alanyl-D-glutamate (UMAG) in the biosynthesis of bacterial cell-wall peptidoglycan. This is UDP-N-acetylmuramoyl-L-alanyl-D-glutamate--2,6-diaminopimelate ligase from Haemophilus influenzae (strain 86-028NP).